The chain runs to 211 residues: uncharacterized protein (211 aa).

The interval 187 to 211 (LKVSEQENSEAPVSEPKEDEKTKKD) is disordered. The segment covering 201–211 (EPKEDEKTKKD) has biased composition (basic and acidic residues).

This is an uncharacterized protein from Spiroplasma citri.